The following is a 123-amino-acid chain: Methylmalonyl-CoA carboxyltransferase 1.3S subunit (123 aa).

Residues 46–123 form the Biotinyl-binding domain; it reads GAGAGKAGEG…QGGQGLIKIG (78 aa). The residue at position 89 (K89) is an N6-biotinyllysine.

Transcarboxylase is composed of three subunits: 1.3S, 5S, and 12S. The core of the enzyme is composed of six 12S subunits. On each side of the core there are three pairs of 5S subunits. Each 5S dimer is attached to the core by two 1.3S subunits. Thus the total number of chains is 30 (6 + 12 + 12).

It carries out the reaction (S)-methylmalonyl-CoA + pyruvate = propanoyl-CoA + oxaloacetate. Functionally, the biotinyl 1.3S subunit serves as a carboxyl carrier between the substrate-binding sites on the 12S and 5S subunits. This Propionibacterium freudenreichii subsp. shermanii protein is Methylmalonyl-CoA carboxyltransferase 1.3S subunit.